The following is a 482-amino-acid chain: uncharacterized protein (482 aa).

In terms of domain architecture, HTH gntR-type spans 12–80; sequence LPKYRQIVHF…MGKGTVVINN (69 aa). The H-T-H motif DNA-binding region spans 40–59; the sequence is QRTLAKDFQVNRSTVITALE. Residue lysine 325 is modified to N6-(pyridoxal phosphate)lysine.

In the C-terminal section; belongs to the class-I pyridoxal-phosphate-dependent aminotransferase family. Pyridoxal 5'-phosphate is required as a cofactor.

This is an uncharacterized protein from Bacillus subtilis (strain 168).